The following is a 417-amino-acid chain: RH-like protein IC (417 aa).

Helical transmembrane passes span 12–32 (CLPL…YFFT), 44–64 (LVAS…GFGF), 77–97 (VAFN…LDGF), 125–145 (ISAG…MVLV), 172–192 (FYVF…KPLP), 203–223 (TIPS…WPSF), 238–258 (VFNT…VSSL), 265–285 (INMT…GTSC), 287–307 (LITS…ISIG), 331–351 (NFSL…VLHT), and 358–378 (MVGF…AIAV).

This sequence belongs to the ammonium transporter (TC 2.A.49) family. Rh subfamily.

Its subcellular location is the membrane. Its function is as follows. May be part of an oligomeric complex which is likely to have a transport or channel function in the erythrocyte membrane. The protein is RH-like protein IC of Gorilla gorilla gorilla (Western lowland gorilla).